The sequence spans 445 residues: Bifunctional protein GlmU (445 aa).

The pyrophosphorylase stretch occupies residues 1 to 218; that stretch reads MRALVLAAGK…LLEITGVNTR (218 aa). UDP-N-acetyl-alpha-D-glucosamine contacts are provided by residues 6–9, K20, Q69, 74–75, 96–98, G134, E147, N162, and N216; these read LAAG, GT, and YGD. D98 serves as a coordination point for Mg(2+). N216 is a binding site for Mg(2+). The linker stretch occupies residues 219-239; sequence KTLVWLEEQLRMRKIEELLEN. The tract at residues 240 to 445 is N-acetyltransferase; sequence GVTILDPATT…GWVLKKRKEE (206 aa). 2 residues coordinate UDP-N-acetyl-alpha-D-glucosamine: R321 and K339. The active-site Proton acceptor is H351. UDP-N-acetyl-alpha-D-glucosamine-binding residues include Y354 and N365. Residues A368, 374 to 375, S393, A411, and R428 each bind acetyl-CoA; that span reads NY.

This sequence in the N-terminal section; belongs to the N-acetylglucosamine-1-phosphate uridyltransferase family. It in the C-terminal section; belongs to the transferase hexapeptide repeat family. In terms of assembly, homotrimer. It depends on Mg(2+) as a cofactor.

It localises to the cytoplasm. The catalysed reaction is alpha-D-glucosamine 1-phosphate + acetyl-CoA = N-acetyl-alpha-D-glucosamine 1-phosphate + CoA + H(+). It carries out the reaction N-acetyl-alpha-D-glucosamine 1-phosphate + UTP + H(+) = UDP-N-acetyl-alpha-D-glucosamine + diphosphate. It functions in the pathway nucleotide-sugar biosynthesis; UDP-N-acetyl-alpha-D-glucosamine biosynthesis; N-acetyl-alpha-D-glucosamine 1-phosphate from alpha-D-glucosamine 6-phosphate (route II): step 2/2. Its pathway is nucleotide-sugar biosynthesis; UDP-N-acetyl-alpha-D-glucosamine biosynthesis; UDP-N-acetyl-alpha-D-glucosamine from N-acetyl-alpha-D-glucosamine 1-phosphate: step 1/1. It participates in bacterial outer membrane biogenesis; LPS lipid A biosynthesis. Functionally, catalyzes the last two sequential reactions in the de novo biosynthetic pathway for UDP-N-acetylglucosamine (UDP-GlcNAc). The C-terminal domain catalyzes the transfer of acetyl group from acetyl coenzyme A to glucosamine-1-phosphate (GlcN-1-P) to produce N-acetylglucosamine-1-phosphate (GlcNAc-1-P), which is converted into UDP-GlcNAc by the transfer of uridine 5-monophosphate (from uridine 5-triphosphate), a reaction catalyzed by the N-terminal domain. In Thermotoga petrophila (strain ATCC BAA-488 / DSM 13995 / JCM 10881 / RKU-1), this protein is Bifunctional protein GlmU.